Reading from the N-terminus, the 632-residue chain is Extracellular metalloproteinase 2 (632 aa).

An N-terminal signal peptide occupies residues 1–19 (MHGLLLAGLAAALPLGVAG). Residues 20-244 (LPARQQSGLS…VHNVVDYVAS (225 aa)) constitute a propeptide that is removed on maturation. A glycan (N-linked (GlcNAc...) asparagine) is linked at asparagine 270. Histidine 429 provides a ligand contact to Zn(2+). Glutamate 430 is an active-site residue. Histidine 433 lines the Zn(2+) pocket.

This sequence belongs to the peptidase M36 family. It depends on Zn(2+) as a cofactor.

It is found in the secreted. In terms of biological role, secreted metalloproteinase probably acting as a virulence factor. This chain is Extracellular metalloproteinase 2 (MEP2), found in Trichophyton rubrum (Athlete's foot fungus).